The sequence spans 529 residues: E3 ubiquitin-protein ligase arih1 (529 aa).

Disordered regions lie at residues 1 to 29 (MDSD…HEDE) and 46 to 69 (ERAG…EEDE). A compositionally biased stretch (gly residues) spans 51–64 (CGEGGGSALGPGPG). The segment at 77-125 (TAEQILQHMVECIREVNEVIQNPATITRILLSHFNWDKEKLMERYFDGN) is UBA-like. The TRIAD supradomain stretch occupies residues 154–365 (LDMPCQICYL…SAWYNCNRYN (212 aa)). Positions 158, 161, 175, 177, 180, 183, 203, 208, 248, 253, 269, 271, 276, 279, 284, 289, 316, and 319 each coordinate Zn(2+). The segment at 158–208 (CQICYLNYPNSYFTGLECGHKFCMQCWGEYLTTKIIEEGMGQTISCPAHGC) adopts an RING-type 1 zinc-finger fold. The segment at 228 to 289 (LKYQHLITNS…GENWHDPVKC (62 aa)) adopts an IBR-type zinc-finger fold. Residues 316 to 347 (CPKCHVTIEKDGGCNHMVCRNQNCKAEFCWVC) form an RING-type 2; atypical zinc finger. C329 is a catalytic residue. Zn(2+) is bound by residues C334, C339, C344, C347, H354, and C361. The tract at residues 380-529 (RAALQRYLFY…EKDLWEYIED (150 aa)) is ariadne domain.

The protein belongs to the RBR family. Ariadne subfamily. As to quaternary structure, interacts (via the first RING-type zinc finger) with ube2l3. Associates with cullin-RING ubiquitin ligase (CRL) complexes containing neddylated cullin.

The protein resides in the cytoplasm. It is found in the nucleus. It catalyses the reaction [E2 ubiquitin-conjugating enzyme]-S-ubiquitinyl-L-cysteine + [acceptor protein]-L-lysine = [E2 ubiquitin-conjugating enzyme]-L-cysteine + [acceptor protein]-N(6)-ubiquitinyl-L-lysine.. Its pathway is protein modification; protein ubiquitination. Its activity is regulated as follows. Autoinhibited by the ariadne domain, which masks the second RING-type zinc finger that contains the active site and inhibits the E3 activity. Inhibition is relieved upon binding to neddylated cullin-RING ubiquitin ligase complexes, which activate the E3 ligase activity of ARIH1. E3 ubiquitin-protein ligase, which catalyzes ubiquitination of target proteins together with ubiquitin-conjugating enzyme E2 ube2l3. Acts as an atypical E3 ubiquitin-protein ligase by working together with cullin-RING ubiquitin ligase (CRL) complexes and initiating ubiquitination of CRL substrates: associates with CRL complexes and specifically mediates addition of the first ubiquitin on CRLs targets. The initial ubiquitin is then elongated. E3 ubiquitin-protein ligase activity is activated upon binding to neddylated cullin-RING ubiquitin ligase complexes. This is E3 ubiquitin-protein ligase arih1 (arih1) from Xenopus laevis (African clawed frog).